We begin with the raw amino-acid sequence, 508 residues long: MGLPWYRVHTVVLNDPGRLLSVHIMHTALVAGWAGSMALYELAVFDPSDPVLDPMWRQGMFVIPFMTRLGITNSWGGWSITGGTTTNPGIWSYEGVAGAHIMFSGLCFLAAIWHWVYWDLEIFCDERTGKPSLDLPKIFGIHLFLAGVACFGFGAFHVTGLYGPGIWVSDPYGLTGKVQSVNPSWGVEGFDPFVPGGIASHHIAAGTLGILAGLFHLSVRPPQRLYKGLRMGNIETVLSSSIAAVFFAAFVVAGTMWYGSATTPIELFGPTRYQWDQGYFQQEIYRRVSAGLAENQSLSEVWSKIPEKLAFYDYIGNNPAKGGLFRAGSMDNGDGIAVGWLGHPIFRDKEGRELFVRRMPTFFETFPVVLVDGDGIVRADVPFRRAESKYSVEQVGVTVEFYGGELNGVSYSDPVTVKKYARRAQLGEIFELDRATLKSDGVFRSSPRGWFTFGHASFALLFFFGHIWHGARTLFRDVFAGIDPDLDAQVEFGAFQKLGDPTTRRQAV.

The next 6 membrane-spanning stretches (helical) occupy residues 21–36 (SVHIMHTALVAGWAGS), 101–115 (IMFSGLCFLAAIWHW), 140–156 (GIHLFLAGVACFGFGAF), 203–218 (IAAGTLGILAGLFHLS), 237–252 (VLSSSIAAVFFAAFVV), and 457–472 (SFALLFFFGHIWHGAR).

This sequence belongs to the PsbB/PsbC family. PsbB subfamily. PSII is composed of 1 copy each of membrane proteins PsbA, PsbB, PsbC, PsbD, PsbE, PsbF, PsbH, PsbI, PsbJ, PsbK, PsbL, PsbM, PsbT, PsbX, PsbY, PsbZ, Psb30/Ycf12, at least 3 peripheral proteins of the oxygen-evolving complex and a large number of cofactors. It forms dimeric complexes. Binds multiple chlorophylls. PSII binds additional chlorophylls, carotenoids and specific lipids. is required as a cofactor.

It localises to the plastid. The protein localises to the chloroplast thylakoid membrane. Functionally, one of the components of the core complex of photosystem II (PSII). It binds chlorophyll and helps catalyze the primary light-induced photochemical processes of PSII. PSII is a light-driven water:plastoquinone oxidoreductase, using light energy to abstract electrons from H(2)O, generating O(2) and a proton gradient subsequently used for ATP formation. This chain is Photosystem II CP47 reaction center protein, found in Guizotia abyssinica (Niger).